Consider the following 481-residue polypeptide: Tagaturonate/fructuronate epimerase (481 aa).

D161 functions as the Proton acceptor in the catalytic mechanism. Position 162 (H162) interacts with a divalent metal cation. Catalysis depends on E266, which acts as the Proton donor. Positions 308 and 341 each coordinate a divalent metal cation.

The protein belongs to the UxaE family. It depends on a divalent metal cation as a cofactor.

The enzyme catalyses keto-D-tagaturonate = keto-D-fructuronate. Functionally, catalyzes the epimerization of D-tagaturonate (D-TagA) to D-fructuronate (D-FruA). This is Tagaturonate/fructuronate epimerase from Thermotoga maritima (strain ATCC 43589 / DSM 3109 / JCM 10099 / NBRC 100826 / MSB8).